The primary structure comprises 637 residues: Extracellular metalloproteinase 2 (637 aa).

The first 20 residues, 1-20, serve as a signal peptide directing secretion; sequence MRSFLLASLASVATLKSAQA. Residues 21-244 constitute a propeptide that is removed on maturation; sequence HPAHSTRGLS…VHAVVDYSAD (224 aa). N-linked (GlcNAc...) asparagine glycosylation is found at asparagine 302, asparagine 328, asparagine 337, and asparagine 413. Zn(2+) is bound at residue histidine 430. Glutamate 431 is an active-site residue. Residue histidine 434 participates in Zn(2+) binding.

It belongs to the peptidase M36 family. Zn(2+) serves as cofactor.

Its subcellular location is the secreted. In terms of biological role, secreted metalloproteinase that allows assimilation of proteinaceous substrates. In Phaeosphaeria nodorum (strain SN15 / ATCC MYA-4574 / FGSC 10173) (Glume blotch fungus), this protein is Extracellular metalloproteinase 2 (MEP2).